Consider the following 212-residue polypeptide: MTKGILGRKVGMTQIFTKDGVLVPVTVVEATPNVVMQVKTVESDGYEAVQLGYQDKREVLSNKPEKGHADKAKTSPKRFIREIRGVELKDYEVGSEVTVDTFKEGDVVNVTGTSRGHGYQGNIKRWGQSRGPETHGSRYHRIPGSMGSIINRVPKGKRLPGHMGMKKVTIENLVIEKVVADKNVLMIKGNVPGAKNSLIVVKTASKAVKADK.

A disordered region spans residues 119–146 (YQGNIKRWGQSRGPETHGSRYHRIPGSM).

It belongs to the universal ribosomal protein uL3 family. Part of the 50S ribosomal subunit. Forms a cluster with proteins L14 and L19.

In terms of biological role, one of the primary rRNA binding proteins, it binds directly near the 3'-end of the 23S rRNA, where it nucleates assembly of the 50S subunit. The chain is Large ribosomal subunit protein uL3 from Lactobacillus helveticus (strain DPC 4571).